The primary structure comprises 1234 residues: MQIPKPNNSTWTDDQWEAIVSEGQDILVAAAAGSGKTAVLVERLIRKMTRPEHPVDVDRLLVVTFTNASAAEMKHRITEALEKELAKNPGSLHMRRQLSLMNRANISTLHSFCLQVLRTFYYEIDLDPGFRLADQTEGELLGDEVLDELFEDEYKAGKPSFFELVDRYTSDRHDLDLQWLVKRIYDFSRSHPSPEQWMRAFLSLYDVDAQTKVEELPFYPYIKEDLSLVLRSCQELLERALSLSKEPGGPAPRAENFIDDLEQVNELIRHQDDFEKLYELLPNVNFKRLKTCKGDEYDPVLLEKATDARNQAKKQLEKLKDEYFMRSPAQHLKSLAEMKPIVETLVELVIQFGERFERAKQEKSIVDFSDLEHYCLRILAEQDAEGHLIETEAAKYYQQQFEEVLVDEYQDTNLVQETILKLVSKGEHSSEGNLFMVGDVKQSIYRFRLAEPMLFLNKYKHFQPDGKETGKRIDLNKNFRSRSDVLDSTNFLFKQLMGETVGEIEYDEQAELKLGASYPESKDTTTEMLLVHLDQQEAETGEEREELETVQFEARIIAKKIKELVEQPFQVYDAKQQMTRNLQYRDIVILLRSMPWAPQMMEELKKQGIPVYANLSSGYFEATEVSVILSLLKVIDNPYQDIPLAAVLRSPLVHLDENELALIRTSDKKGTYYDAVKAFMSVTHSDHPTCKKLERFFQLLRKWRDFSINHSVAELIWEVYRDTQYLDYVGGMPGGKQRQANLRALYDRAKQYEKAAFRGLFRFLRFIERMQERGDDLGAAKTFSETEDVVRMMTIHSSKGLEFPVVFTVGLGRNFNMMDLNQSYLLDKELGFGSKYIHPELRISYATLPLVAMKKKMRKELLSEELRVLYVALTRAKEKLFLVGSVKNQVKALSKWQNAATGEEWLLPDFERYQSKTYLDFIGPALIRHQAMSSVLEETGDVVLSHPSTFTISFTQASDLLKEDMSLEKKEQDEIVQALMDGLPVEGYGDADEKVAERLSWKYPYLAASQVGTKQSVSEIKRMKEIQDEYSVPSSIRKARATLYDRPAFMKKKTLTAAEQGTAMHTVMQHIPLPSEEPYDESRIGHLLDSLQQRDLLTDEQVQSINQEGIAAFFSTSIGQKLLKADWVKREVSFSMVLPVKEVYSHIDTEGEPVLIQGMIDCLFETDGKLYLLDYKTDRVQGRYTGGIDAAVPILKKRYETQIALYAKAVERLTNRTLEEKILYFFDGNVEISL.

The 474-residue stretch at Ser-9–Arg-482 folds into the UvrD-like helicase ATP-binding domain. Residue Ala-30–Thr-37 participates in ATP binding. The 292-residue stretch at Gln-509–Gly-800 folds into the UvrD-like helicase C-terminal domain.

This sequence belongs to the helicase family. AddA subfamily. Heterodimer of AddA and AddB/RexB. Mg(2+) is required as a cofactor.

It catalyses the reaction Couples ATP hydrolysis with the unwinding of duplex DNA by translocating in the 3'-5' direction.. It carries out the reaction ATP + H2O = ADP + phosphate + H(+). Functionally, the heterodimer acts as both an ATP-dependent DNA helicase and an ATP-dependent, dual-direction single-stranded exonuclease. Recognizes the chi site generating a DNA molecule suitable for the initiation of homologous recombination. The AddA nuclease domain is required for chi fragment generation; this subunit has the helicase and 3' -&gt; 5' nuclease activities. This Bacillus pumilus (strain SAFR-032) protein is ATP-dependent helicase/nuclease subunit A.